Reading from the N-terminus, the 302-residue chain is Sulfate adenylyltransferase subunit 2 (302 aa).

Belongs to the PAPS reductase family. CysD subfamily. As to quaternary structure, heterodimer composed of CysD, the smaller subunit, and CysN.

It carries out the reaction sulfate + ATP + H(+) = adenosine 5'-phosphosulfate + diphosphate. The protein operates within sulfur metabolism; hydrogen sulfide biosynthesis; sulfite from sulfate: step 1/3. In terms of biological role, with CysN forms the ATP sulfurylase (ATPS) that catalyzes the adenylation of sulfate producing adenosine 5'-phosphosulfate (APS) and diphosphate, the first enzymatic step in sulfur assimilation pathway. APS synthesis involves the formation of a high-energy phosphoric-sulfuric acid anhydride bond driven by GTP hydrolysis by CysN coupled to ATP hydrolysis by CysD. The protein is Sulfate adenylyltransferase subunit 2 of Citrobacter koseri (strain ATCC BAA-895 / CDC 4225-83 / SGSC4696).